The following is a 32-amino-acid chain: CSNLSTCVLSAYWKDLNNYHRFSGMGFGPETP.

Residues Cys-1 and Cys-7 are joined by a disulfide bond. Position 32 is a proline amide (Pro-32).

The protein belongs to the calcitonin family.

The protein localises to the secreted. Its function is as follows. Calcitonin is a peptide hormone that causes a rapid but short-lived drop in the level of calcium and phosphate in blood by promoting the incorporation of those ions in the bones. Calcitonin function is mediated by the calcitonin receptor/CALCR and the CALCR-RAMP2 (AMYR2) receptor complex. In Bos taurus (Bovine), this protein is Calcitonin (CALCA).